Here is a 304-residue protein sequence, read N- to C-terminus: Tyrosine recombinase XerC (304 aa).

Residues 2 to 88 (ANVKNFLTLF…ALRSFYKFLL (87 aa)) form the Core-binding (CB) domain. The region spanning 109–294 (RIPKFLYEKE…SKDMLRKTYM (186 aa)) is the Tyr recombinase domain. Residues Arg-149, Lys-173, His-246, Arg-249, and His-272 contribute to the active site. Tyr-281 (O-(3'-phospho-DNA)-tyrosine intermediate) is an active-site residue.

It belongs to the 'phage' integrase family. XerC subfamily. In terms of assembly, forms a cyclic heterotetrameric complex composed of two molecules of XerC and two molecules of XerD.

It is found in the cytoplasm. In terms of biological role, site-specific tyrosine recombinase, which acts by catalyzing the cutting and rejoining of the recombining DNA molecules. The XerC-XerD complex is essential to convert dimers of the bacterial chromosome into monomers to permit their segregation at cell division. It also contributes to the segregational stability of plasmids. This is Tyrosine recombinase XerC from Bacillus licheniformis (strain ATCC 14580 / DSM 13 / JCM 2505 / CCUG 7422 / NBRC 12200 / NCIMB 9375 / NCTC 10341 / NRRL NRS-1264 / Gibson 46).